We begin with the raw amino-acid sequence, 509 residues long: MEELQGYLKIDRSRERDFLYPLLFQEYIYALAHDHGLNKSILYEPMENLGYDKKYSLIIVKRLITRMYQQKHLIIFTNDSNTNFFFGHNKNLDSQMISEGVAVIVELPFSLRLVSSPESKEIDKSMTTLRSIHSIFPFLEDKLLHLNHVLDILIPYPIHLELLVQTLRSWIQDAPFLHLLRFFLYKYHNWNSLITQKTKMILFFSKENQRFFLFLYNFHVYESESIFVFLRKQSYHLRSTSSRAFLDRTHFYRKIEHFLVDFRNDFHTILWLFKDPFIQYFRFQGKSILSSKGTPLLMKKWKYYLVNLWECHFYFWSQPDRIHINQLSNHFIDFLGYLSSVRPTPSAVRSQMLEKSFIIDIVIKKFDTIVPIIPLIGSLAKAKFCNFSGHPISKPAWADSSDSDIIDRFGRICRNLSHYYSGSSKKKSLYRIKYILRLSCARTLARKHKSTVRSFLKRLGSEFLEEFLMEEEQVLSFILPRISYFSKRLYKERIWYFDIIRINDLTNLS.

This sequence belongs to the intron maturase 2 family. MatK subfamily.

It localises to the plastid. It is found in the chloroplast. Functionally, usually encoded in the trnK tRNA gene intron. Probably assists in splicing its own and other chloroplast group II introns. The protein is Maturase K of Clematis lasiantha (Pipestem clematis).